Here is a 105-residue protein sequence, read N- to C-terminus: Translation initiation factor 1A (105 aa).

Positions 12–87 constitute an S1-like domain; that stretch reads TRVRTPREEN…QKCDIIWRYT (76 aa).

Belongs to the eIF-1A family.

In terms of biological role, seems to be required for maximal rate of protein biosynthesis. Enhances ribosome dissociation into subunits and stabilizes the binding of the initiator Met-tRNA(I) to 40 S ribosomal subunits. This is Translation initiation factor 1A (eIF1A) from Methanococcus aeolicus (strain ATCC BAA-1280 / DSM 17508 / OCM 812 / Nankai-3).